The sequence spans 419 residues: Light-dependent chlorophyll f synthase (419 aa).

5 helical membrane-spanning segments follow: residues 73-90 (YIGW…TAAI), 162-177 (HFII…EWEL), 186-200 (WISL…ASVS), 241-262 (LHQM…HGSL), and 323-337 (CLAA…SAAI). A chlorophyll is bound at residue histidine 162. Histidine 242 serves as a coordination point for a chlorophyll.

This sequence belongs to the reaction center PufL/M/PsbA/D family. In terms of assembly, homodimer.

The protein resides in the cellular thylakoid membrane. In terms of biological role, synthesizes chlorophyll f or chlorophyllide f (Chl f, 2-formyl chlorophyll a), probably by oxidation of chlorophyll a or chlorophyllide a and reduction of plastoquinone. The reaction is probably light-dependent. Chl f absorbs far red light (FRL, 707 nm in 100% methanol), and is synthesized when cells are grown in FRL, where it provides the advantage of extending the spectral range of harvested light in terrestrial cyanobacteria. Chl f synthesis is probably light-dependent. The sequence is that of Light-dependent chlorophyll f synthase from Synechococcus sp. (strain ATCC 29403 / PCC 7335).